A 64-amino-acid chain; its full sequence is MARRDQLTGKGPLSGNTRSHAMNHSKRRWNVNLQKATIKTENGSQRVLVSAKTLKTLKKHNLLA.

The disordered stretch occupies residues 1–26 (MARRDQLTGKGPLSGNTRSHAMNHSK).

The protein belongs to the bacterial ribosomal protein bL28 family.

The protein is Large ribosomal subunit protein bL28 of Ureaplasma urealyticum serovar 10 (strain ATCC 33699 / Western).